Reading from the N-terminus, the 438-residue chain is Argininosuccinate lyase (438 aa).

The protein belongs to the lyase 1 family. Argininosuccinate lyase subfamily.

It localises to the cytoplasm. It catalyses the reaction 2-(N(omega)-L-arginino)succinate = fumarate + L-arginine. Its pathway is amino-acid biosynthesis; L-arginine biosynthesis; L-arginine from L-ornithine and carbamoyl phosphate: step 3/3. The polypeptide is Argininosuccinate lyase (Clostridium kluyveri (strain NBRC 12016)).